The following is an 808-amino-acid chain: DNA gyrase subunit B (808 aa).

The 116-residue stretch at Ser-429–Pro-544 folds into the Toprim domain. 3 residues coordinate Mg(2+): Glu-435, Asp-509, and Asp-511.

This sequence belongs to the type II topoisomerase GyrB family. In terms of assembly, heterotetramer, composed of two GyrA and two GyrB chains. In the heterotetramer, GyrA contains the active site tyrosine that forms a transient covalent intermediate with DNA, while GyrB binds cofactors and catalyzes ATP hydrolysis. It depends on Mg(2+) as a cofactor. Mn(2+) serves as cofactor. Requires Ca(2+) as cofactor.

It localises to the cytoplasm. The enzyme catalyses ATP-dependent breakage, passage and rejoining of double-stranded DNA.. Its function is as follows. A type II topoisomerase that negatively supercoils closed circular double-stranded (ds) DNA in an ATP-dependent manner to modulate DNA topology and maintain chromosomes in an underwound state. Negative supercoiling favors strand separation, and DNA replication, transcription, recombination and repair, all of which involve strand separation. Also able to catalyze the interconversion of other topological isomers of dsDNA rings, including catenanes and knotted rings. Type II topoisomerases break and join 2 DNA strands simultaneously in an ATP-dependent manner. The sequence is that of DNA gyrase subunit B from Rickettsia bellii (strain RML369-C).